The primary structure comprises 673 residues: UvrABC system protein B (673 aa).

The Helicase ATP-binding domain maps to 26 to 415; the sequence is EGLEDGLAHQ…GDVVDQVVRP (390 aa). 39-46 contacts ATP; it reads GVTGSGKT. The Beta-hairpin motif lies at 92 to 115; sequence YYDYYQPEAYVPSSDTFIEKDASV. A Helicase C-terminal domain is found at 431-597; sequence QVDDLLSEIR…GLNKKVVDIL (167 aa). The tract at residues 608-627 is disordered; the sequence is AKGRGKSRPIVEPDNVPMDM. Residues 633–668 enclose the UVR domain; it reads QQKIHELEGLMMQHAQNLEFEEAAQIRDQLHQLREL.

Belongs to the UvrB family. Forms a heterotetramer with UvrA during the search for lesions. Interacts with UvrC in an incision complex.

It localises to the cytoplasm. Its function is as follows. The UvrABC repair system catalyzes the recognition and processing of DNA lesions. A damage recognition complex composed of 2 UvrA and 2 UvrB subunits scans DNA for abnormalities. Upon binding of the UvrA(2)B(2) complex to a putative damaged site, the DNA wraps around one UvrB monomer. DNA wrap is dependent on ATP binding by UvrB and probably causes local melting of the DNA helix, facilitating insertion of UvrB beta-hairpin between the DNA strands. Then UvrB probes one DNA strand for the presence of a lesion. If a lesion is found the UvrA subunits dissociate and the UvrB-DNA preincision complex is formed. This complex is subsequently bound by UvrC and the second UvrB is released. If no lesion is found, the DNA wraps around the other UvrB subunit that will check the other stand for damage. The polypeptide is UvrABC system protein B (Escherichia coli O6:H1 (strain CFT073 / ATCC 700928 / UPEC)).